Consider the following 105-residue polypeptide: Small ribosomal subunit protein uS10 (105 aa).

Belongs to the universal ribosomal protein uS10 family. In terms of assembly, part of the 30S ribosomal subunit.

Its function is as follows. Involved in the binding of tRNA to the ribosomes. The chain is Small ribosomal subunit protein uS10 from Chlamydia muridarum (strain MoPn / Nigg).